The chain runs to 347 residues: D-alanine--D-alanine ligase (347 aa).

Residues 131–333 (KRVLESAGIA…YPELIERLVD (203 aa)) enclose the ATP-grasp domain. 161–216 (EEKLAYPVFTKPSNMGSSVGISKSENQEELRQALELAFRYDSRVLVEQGVNAREIE) contributes to the ATP binding site. Residues Asp-287, Glu-300, and Asn-302 each coordinate Mg(2+).

The protein belongs to the D-alanine--D-alanine ligase family. It depends on Mg(2+) as a cofactor. Requires Mn(2+) as cofactor.

It localises to the cytoplasm. The enzyme catalyses 2 D-alanine + ATP = D-alanyl-D-alanine + ADP + phosphate + H(+). The protein operates within cell wall biogenesis; peptidoglycan biosynthesis. Its function is as follows. Cell wall formation. This is D-alanine--D-alanine ligase from Streptococcus pneumoniae (strain CGSP14).